A 211-amino-acid polypeptide reads, in one-letter code: Thiamine-phosphate synthase (211 aa).

4-amino-2-methyl-5-(diphosphooxymethyl)pyrimidine contacts are provided by residues 35–39 (QLRDK) and N67. Positions 68 and 87 each coordinate Mg(2+). S106 lines the 4-amino-2-methyl-5-(diphosphooxymethyl)pyrimidine pocket. 132-134 (TGS) provides a ligand contact to 2-[(2R,5Z)-2-carboxy-4-methylthiazol-5(2H)-ylidene]ethyl phosphate. 4-amino-2-methyl-5-(diphosphooxymethyl)pyrimidine is bound at residue K135. Residues G163 and 183–184 (IS) contribute to the 2-[(2R,5Z)-2-carboxy-4-methylthiazol-5(2H)-ylidene]ethyl phosphate site.

Belongs to the thiamine-phosphate synthase family. Requires Mg(2+) as cofactor.

It catalyses the reaction 2-[(2R,5Z)-2-carboxy-4-methylthiazol-5(2H)-ylidene]ethyl phosphate + 4-amino-2-methyl-5-(diphosphooxymethyl)pyrimidine + 2 H(+) = thiamine phosphate + CO2 + diphosphate. It carries out the reaction 2-(2-carboxy-4-methylthiazol-5-yl)ethyl phosphate + 4-amino-2-methyl-5-(diphosphooxymethyl)pyrimidine + 2 H(+) = thiamine phosphate + CO2 + diphosphate. The catalysed reaction is 4-methyl-5-(2-phosphooxyethyl)-thiazole + 4-amino-2-methyl-5-(diphosphooxymethyl)pyrimidine + H(+) = thiamine phosphate + diphosphate. Its pathway is cofactor biosynthesis; thiamine diphosphate biosynthesis; thiamine phosphate from 4-amino-2-methyl-5-diphosphomethylpyrimidine and 4-methyl-5-(2-phosphoethyl)-thiazole: step 1/1. Its function is as follows. Condenses 4-methyl-5-(beta-hydroxyethyl)thiazole monophosphate (THZ-P) and 2-methyl-4-amino-5-hydroxymethyl pyrimidine pyrophosphate (HMP-PP) to form thiamine monophosphate (TMP). This chain is Thiamine-phosphate synthase, found in Methanoculleus marisnigri (strain ATCC 35101 / DSM 1498 / JR1).